Here is a 293-residue protein sequence, read N- to C-terminus: 4-hydroxy-tetrahydrodipicolinate synthase (293 aa).

A pyruvate-binding site is contributed by T47. The active-site Proton donor/acceptor is Y135. Catalysis depends on K163, which acts as the Schiff-base intermediate with substrate. Pyruvate is bound at residue V205.

The protein belongs to the DapA family. Homotetramer; dimer of dimers.

It is found in the cytoplasm. The catalysed reaction is L-aspartate 4-semialdehyde + pyruvate = (2S,4S)-4-hydroxy-2,3,4,5-tetrahydrodipicolinate + H2O + H(+). It participates in amino-acid biosynthesis; L-lysine biosynthesis via DAP pathway; (S)-tetrahydrodipicolinate from L-aspartate: step 3/4. Functionally, catalyzes the condensation of (S)-aspartate-beta-semialdehyde [(S)-ASA] and pyruvate to 4-hydroxy-tetrahydrodipicolinate (HTPA). The chain is 4-hydroxy-tetrahydrodipicolinate synthase from Methylibium petroleiphilum (strain ATCC BAA-1232 / LMG 22953 / PM1).